A 416-amino-acid polypeptide reads, in one-letter code: Phosphatidylinositol 5-phosphate 4-kinase type-2 beta (416 aa).

S2 carries the N-acetylserine modification. The residue at position 8 (T8) is a Phosphothreonine. S19 is subject to Phosphoserine. One can recognise a PIPK domain in the interval 38–415; sequence ASEPILSVLM…RFNEFMSNIL (378 aa). A required for interaction with PIP5K1A region spans residues 64–70; that stretch reads VMLMPDD. N6-acetyllysine occurs at positions 94 and 150. ATP-binding positions include 202 to 204 and K214; that span reads RNV. GTP contacts are provided by residues 203–204 and K214; that span reads NV. Phosphothreonine is present on T322. Position 326 is a phosphoserine (S326). D369 is a GTP binding site.

As to quaternary structure, homodimer. Binds TNFRSF1A. Interacts with PIP4K2A; the interaction suppresses ubiquitination by the SPOP/CUL3 complex. Probably interacts with PIP5K1A; the interaction inhibits PIP5K1A kinase activity. In terms of processing, ubiquitinated by the SPOP/CUL3 complex. Ubiquitination is stimulated by PtdIns5P levels. Post-translationally, phosphorylated on serine residues.

It localises to the endoplasmic reticulum membrane. The protein resides in the cell membrane. The protein localises to the nucleus. Its subcellular location is the cytoplasm. The enzyme catalyses a 1,2-diacyl-sn-glycero-3-phospho-(1D-myo-inositol-5-phosphate) + ATP = a 1,2-diacyl-sn-glycero-3-phospho-(1D-myo-inositol-4,5-bisphosphate) + ADP + H(+). It carries out the reaction 1,2-dihexadecanoyl-sn-glycero-3-phospho-(1D-myo-inositol-5-phosphate) + ATP = 1,2-dihexadecanoyl-sn-glycero-3-phospho-(1D-myo-inositol-4,5-bisphosphate) + ADP + H(+). The catalysed reaction is 1,2-dihexadecanoyl-sn-glycero-3-phospho-(1D-myo-inositol-5-phosphate) + GTP = 1,2-dihexadecanoyl-sn-glycero-3-phospho-(1D-myo-inositol-4,5-bisphosphate) + GDP + H(+). Functionally, participates in the biosynthesis of phosphatidylinositol 4,5-bisphosphate. Preferentially utilizes GTP, rather than ATP, for PI(5)P phosphorylation and its activity reflects changes in direct proportion to the physiological GTP concentration. Its GTP-sensing activity is critical for metabolic adaptation. PIP4Ks negatively regulate insulin signaling through a catalytic-independent mechanism. They interact with PIP5Ks and suppress PIP5K-mediated PtdIns(4,5)P2 synthesis and insulin-dependent conversion to PtdIns(3,4,5)P3. The sequence is that of Phosphatidylinositol 5-phosphate 4-kinase type-2 beta from Rattus norvegicus (Rat).